The chain runs to 401 residues: MKILVLNAGSSSQKSCLYDLEFLPGHPPQPIWQAGIDWTVNPDYAVLTVKAQGIKQEINLSSQDRPAGIARMLDTLVTGETKVVANLADISIVGHRVVHGGTEYSQATMITPQVKETIKKLIPLAPSHNPAHLEGIEAIEQVLGDVPQVAVFDTAFHRSIPPESSLYPIPYQWSELGIRRYGFHGTSHQYCSQRAAELLGKPLESLKMVICHLGNGASLSAVKGGKSIDTTMGFTPLEGLMMGTRSGSIDPGILIYLEREYQYNPDSLNSLLNKESGLKGISGISGDMRAITTAMAEGNERAKLAFEMYIHRLKSLIGSMIASLEGLDVLVFTAGIGENSALVREKASQGWSFFGLELDLAKNAARPRDEDIASETSKVRVMVIATAEDWAIARECWHLSP.

Asparagine 7 contributes to the Mg(2+) binding site. Lysine 14 serves as a coordination point for ATP. Arginine 96 lines the substrate pocket. Aspartate 153 serves as the catalytic Proton donor/acceptor. ATP-binding positions include 212 to 216 (HLGNG), 287 to 289 (DMR), and 335 to 339 (GIGEN). Glutamate 388 provides a ligand contact to Mg(2+).

Belongs to the acetokinase family. Homodimer. It depends on Mg(2+) as a cofactor. Mn(2+) is required as a cofactor.

The protein localises to the cytoplasm. It catalyses the reaction acetate + ATP = acetyl phosphate + ADP. It participates in metabolic intermediate biosynthesis; acetyl-CoA biosynthesis; acetyl-CoA from acetate: step 1/2. In terms of biological role, catalyzes the formation of acetyl phosphate from acetate and ATP. Can also catalyze the reverse reaction. This Microcystis aeruginosa (strain NIES-843 / IAM M-2473) protein is Acetate kinase.